The primary structure comprises 314 residues: Vacuolar membrane protein EC1118_1N9_3125g (314 aa).

Residues 32–60 form a disordered region; that stretch reads KPTSSVVSETSSKSLPSLTSSAFSTSSGA. Residues 93 to 113 traverse the membrane as a helical segment; that stretch reads VYIAVGAVIGAIFISILIWWL. Phosphoserine occurs at positions 148, 254, and 274. The disordered stretch occupies residues 240–309; sequence EERKLNLNRP…PSMFLDDVLN (70 aa). Residues 254–269 are compositionally biased toward basic and acidic residues; that stretch reads SPERKEKKINSMEGYH.

The protein belongs to the PRM5 family.

The protein localises to the vacuole membrane. This chain is Vacuolar membrane protein EC1118_1N9_3125g, found in Saccharomyces cerevisiae (strain Lalvin EC1118 / Prise de mousse) (Baker's yeast).